A 338-amino-acid polypeptide reads, in one-letter code: Solute carrier family 35 member B1 homolog (338 aa).

Transmembrane regions (helical) follow at residues 9–29 (FVIYAVGIFVCYFLYGIVQEK), 53–73 (LALVWVQCLCNYVFAKVLLTI), 84–104 (GSYVACSLTYLLAMVSTNMAM), 111–131 (TAVVGKSAKPIPVMILGVLIG), 135–155 (YSWTRYACVLTIVLGVILFMY), 168–188 (TLLGEVLLFLSLSMDGLTGAV), 213–233 (LMLGVAMVFTGEAKEFMYFTI), 244–264 (LIAVCGVLGQFFIFLMVASFG), and 284–304 (VLLFGNVLIARQWLGAVLVFA). A Di-lysine motif motif is present at residues 334-338 (KKLNS).

This sequence belongs to the nucleotide-sugar transporter family. SLC35B subfamily.

It is found in the endoplasmic reticulum membrane. Functionally, probable sugar transporter. The polypeptide is Solute carrier family 35 member B1 homolog (meigo) (Drosophila melanogaster (Fruit fly)).